The following is a 122-amino-acid chain: Putative syntaxin 6 (122 aa).

The Cytoplasmic portion of the chain corresponds to 1 to 100; it reads MSNYRYSKLN…AKLTHLEDES (100 aa). The 63-residue stretch at 31–93 folds into the t-SNARE coiled-coil homology domain; the sequence is EQIIQEQDDE…DTAMKKMAKL (63 aa). A helical; Anchor for type IV membrane protein transmembrane segment spans residues 101 to 121; sequence SQCKMIMVLSALLFFLVFVLL. Residue valine 122 is a topological domain, extracellular.

Belongs to the syntaxin family.

The protein resides in the membrane. In terms of biological role, SNARE promoting movement of transport vesicles to target membranes. Potentially functions in retrograde trafficking and in the endocytic recycling pathway. The protein is Putative syntaxin 6 (syx-6) of Caenorhabditis elegans.